Consider the following 706-residue polypeptide: UvrABC system protein C (706 aa).

Residues 16-95 enclose the GIY-YIG domain; it reads VEPGVYRFRD…IKEFDPRFNV (80 aa). In terms of domain architecture, UVR spans 208–243; sequence DRLAKDMEQQMTAAAEQLDFERAARLRDDISALKRA. The tract at residues 651-706 is disordered; that stretch reads APQNGTAPDPAPGTGDPQTPADPHSAATAADIEDDRHATGATGPQMNGSEQQVDRV. The span at 692 to 706 shows a compositional bias: polar residues; that stretch reads TGPQMNGSEQQVDRV.

The protein belongs to the UvrC family. Interacts with UvrB in an incision complex.

It is found in the cytoplasm. Functionally, the UvrABC repair system catalyzes the recognition and processing of DNA lesions. UvrC both incises the 5' and 3' sides of the lesion. The N-terminal half is responsible for the 3' incision and the C-terminal half is responsible for the 5' incision. The sequence is that of UvrABC system protein C from Mycolicibacterium smegmatis (strain ATCC 700084 / mc(2)155) (Mycobacterium smegmatis).